The primary structure comprises 536 residues: Adenine deaminase (536 aa).

The segment at 1-24 is disordered; the sequence is MTPSPHDLLHCGMNSQDRDETNGD.

Belongs to the metallo-dependent hydrolases superfamily. Adenine deaminase family. Requires Mn(2+) as cofactor.

The catalysed reaction is adenine + H2O + H(+) = hypoxanthine + NH4(+). This chain is Adenine deaminase, found in Deinococcus radiodurans (strain ATCC 13939 / DSM 20539 / JCM 16871 / CCUG 27074 / LMG 4051 / NBRC 15346 / NCIMB 9279 / VKM B-1422 / R1).